The chain runs to 272 residues: Type III pantothenate kinase (272 aa).

6–13 lines the ATP pocket; sequence DVRNTHTV. Residue 109-112 participates in substrate binding; that stretch reads GADR. Residue Asp111 is the Proton acceptor of the active site. Position 131 (Asp131) interacts with K(+). Ser134 contacts ATP. Position 186 (Thr186) interacts with substrate.

Belongs to the type III pantothenate kinase family. As to quaternary structure, homodimer. It depends on NH4(+) as a cofactor. Requires K(+) as cofactor.

The protein localises to the cytoplasm. The enzyme catalyses (R)-pantothenate + ATP = (R)-4'-phosphopantothenate + ADP + H(+). Its pathway is cofactor biosynthesis; coenzyme A biosynthesis; CoA from (R)-pantothenate: step 1/5. Its function is as follows. Catalyzes the phosphorylation of pantothenate (Pan), the first step in CoA biosynthesis. The protein is Type III pantothenate kinase of Mycobacterium marinum (strain ATCC BAA-535 / M).